The chain runs to 318 residues: Probable mitochondrial 2-oxoglutarate/malate carrier protein (318 aa).

3 Solcar repeats span residues Q22–I111, L119–L210, and D219–L309. The next 6 membrane-spanning stretches (helical) occupy residues F28–L48, G79–T99, I125–T145, G185–D205, L225–I245, and F281–I301.

Belongs to the mitochondrial carrier (TC 2.A.29) family.

The protein localises to the mitochondrion inner membrane. In terms of biological role, mitochondrial solute carriers shuttle metabolites, nucleotides, and cofactors through the mitochondrial inner membrane. Catalyzes the transport of 2-oxoglutarate across the inner mitochondrial membrane in an electroneutral exchange for malate or other dicarboxylic acids, and plays an important role in several metabolic processes, including the malate-aspartate shuttle, the oxoglutarate/isocitrate shuttle, in gluconeogenesis from lactate, and in nitrogen metabolism. In Dictyostelium discoideum (Social amoeba), this protein is Probable mitochondrial 2-oxoglutarate/malate carrier protein (ucpC).